A 446-amino-acid chain; its full sequence is 3-phosphoshikimate 1-carboxyvinyltransferase (446 aa).

3-phosphoshikimate is bound by residues Lys-26, Ser-27, and Arg-31. Position 26 (Lys-26) interacts with phosphoenolpyruvate. Phosphoenolpyruvate is bound by residues Gly-100 and Arg-128. Residues Ser-171, Ser-172, Gln-173, Ser-200, Glu-315, and His-344 each coordinate 3-phosphoshikimate. Gln-173 contacts phosphoenolpyruvate. Catalysis depends on Glu-315, which acts as the Proton acceptor. Arg-348, Arg-389, and Lys-414 together coordinate phosphoenolpyruvate.

Belongs to the EPSP synthase family. Monomer.

It is found in the cytoplasm. It carries out the reaction 3-phosphoshikimate + phosphoenolpyruvate = 5-O-(1-carboxyvinyl)-3-phosphoshikimate + phosphate. It participates in metabolic intermediate biosynthesis; chorismate biosynthesis; chorismate from D-erythrose 4-phosphate and phosphoenolpyruvate: step 6/7. Functionally, catalyzes the transfer of the enolpyruvyl moiety of phosphoenolpyruvate (PEP) to the 5-hydroxyl of shikimate-3-phosphate (S3P) to produce enolpyruvyl shikimate-3-phosphate and inorganic phosphate. This Mycolicibacterium gilvum (strain PYR-GCK) (Mycobacterium gilvum (strain PYR-GCK)) protein is 3-phosphoshikimate 1-carboxyvinyltransferase.